Consider the following 545-residue polypeptide: Betaine receptor acr-23 (545 aa).

The N-terminal stretch at M1–S19 is a signal peptide. The Extracellular portion of the chain corresponds to N20–Y244. N-linked (GlcNAc...) asparagine glycans are attached at residues N53 and N97. 2 cysteine pairs are disulfide-bonded: C157–C171 and C224–C225. N228 is a glycosylation site (N-linked (GlcNAc...) asparagine). The helical transmembrane segment at Y245–F265 threads the bilayer. The N-linked (GlcNAc...) asparagine glycan is linked to N276. Transmembrane regions (helical) follow at residues E287–S307 and V317–A337. Residues A338–R512 lie on the Cytoplasmic side of the membrane. The helical transmembrane segment at V513–G533 threads the bilayer.

This sequence belongs to the ligand-gated ion channel (TC 1.A.9) family. Acetylcholine receptor (TC 1.A.9.1) subfamily. In terms of tissue distribution, expressed in the body wall muscles that are arranged into four longitudinal bundles, some mechanosensory neurons, the head muscles and multiple interneurons. Not expressed in motor neurons (at protein level).

The protein localises to the cell membrane. Its function is as follows. Betaine receptor that functions as a ligand-gated non-selective monovalent cation channel in mechanosensory neurons to maintain basal levels of locomotion. The channel is permeable to Na(+) and K(+) but not to Ba(2+) or Ca(2+) ions. Elicits current in response to betaine, very weak current in response to choline, virtually no current in response to acetylcholine and nicotine, and no current in response to glycine and GABA. This Caenorhabditis elegans protein is Betaine receptor acr-23.